We begin with the raw amino-acid sequence, 204 residues long: Inner membrane-spanning protein YciB (204 aa).

6 helical membrane-spanning segments follow: residues 3–23, 45–65, 70–90, 107–127, 145–165, and 168–188; these read AEIS…VFFF, IFIA…VSWI, LPIM…LTLW, LFGV…GYVF, WGVF…MFTT, and WVAF…MAQM.

It belongs to the YciB family.

The protein localises to the cell inner membrane. Plays a role in cell envelope biogenesis, maintenance of cell envelope integrity and membrane homeostasis. The chain is Inner membrane-spanning protein YciB from Agrobacterium fabrum (strain C58 / ATCC 33970) (Agrobacterium tumefaciens (strain C58)).